Reading from the N-terminus, the 180-residue chain is Nucleoplasmin-3 (180 aa).

At alanine 2 the chain carries N-acetylalanine. A phosphoserine mark is found at serine 13 and serine 16. Arginine 27 is modified (omega-N-methylarginine). The interval 141-180 (TMSNDVSEEESEEEEEEEDSDEEEAELCPILPAKKQGGRP) is disordered. A compositionally biased stretch (acidic residues) spans 146–166 (VSEEESEEEEEEEDSDEEEAE). Serine 147, serine 151, and serine 160 each carry phosphoserine.

It belongs to the nucleoplasmin family. In terms of assembly, interacts with NPM (via N-terminus). Forms a pentamer with NPM at a ratio 4:1 (NPM3/NPM). Two pentamers form a decamer. In terms of processing, phosphorylated.

The protein resides in the nucleus. The protein localises to the nucleolus. Functionally, plays a role in the regulation of diverse cellular processes such as ribosome biogenesis, chromatin remodeling or protein chaperoning. Modulates the histone chaperone function and the RNA-binding activity of nucleolar phosphoprotein B23/NPM. Efficiently mediates chromatin remodeling when included in a pentamer containing NPM3 and NPM. This Pongo abelii (Sumatran orangutan) protein is Nucleoplasmin-3 (NPM3).